The following is a 66-amino-acid chain: uncharacterized protein (66 aa).

This is an uncharacterized protein from Vertebrata (FPV).